Here is a 360-residue protein sequence, read N- to C-terminus: G-protein coupled receptor 183 (360 aa).

At 1 to 30 the chain is on the extracellular side; sequence MDIKMDNFTTPSAASLESDCDLYAHHHTAR. Asparagine 7 carries an N-linked (GlcNAc...) asparagine glycan. A helical membrane pass occupies residues 31–56; that stretch reads ILMPLHYSIVFIIGLVGNLLALIVII. The Cytoplasmic portion of the chain corresponds to 57 to 76; sequence QNRKKINSTTLYSTNLVISD. A helical transmembrane segment spans residues 77–94; that stretch reads ILFTTALPTRIAYYALGF. Residue arginine 86 coordinates 7alpha,25-dihydroxycholesterol. Topologically, residues 95-104 are extracellular; the sequence is DWRIGDALCR. An intrachain disulfide couples cysteine 103 to cysteine 180. A helical transmembrane segment spans residues 105-126; the sequence is ITALVFYINTYAGVNFMTCLSI. 2 residues coordinate 7alpha,25-dihydroxycholesterol: tyrosine 111 and tyrosine 115. Positions 125–133 are interaction with G proteins; the sequence is SIDRFFAVV. Residues 127-148 lie on the Cytoplasmic side of the membrane; the sequence is DRFFAVVHPLRYNKIKRIEHAK. Residues 149-167 form a helical membrane-spanning segment; that stretch reads CICIFVWILVFGQTLPLLI. Over 168–191 the chain is Extracellular; it reads NPMSKQEAERTTCMEYPNFEETKS. Residues 192–214 traverse the membrane as a helical segment; it reads LPWILLGACFIGYVLPLVIILIC. The Cytoplasmic portion of the chain corresponds to 215–240; that stretch reads YSQICCKLFKTAKQNPLTEKSGVNKK. A helical membrane pass occupies residues 241–264; it reads ALNTIIFIIVVFVVCFTPYHVAII. 7alpha,25-dihydroxycholesterol is bound at residue tyrosine 259. Residues 265–286 lie on the Extracellular side of the membrane; it reads QHMIKKLRLPGLLECSQRHSFQ. The chain crosses the membrane as a helical span at residues 287 to 311; it reads ISLHFTVCLMNFNCCMDPFIYFFAC. At 312-360 the chain is on the cytoplasmic side; sequence KGYKRKVMKMLKRQVSVSISSAVRSAPEENSREMTETQMMIHSKSLNGK. Serine 327 carries the phosphoserine modification. The disordered stretch occupies residues 339–360; the sequence is EENSREMTETQMMIHSKSLNGK. The segment covering 347–360 has biased composition (polar residues); that stretch reads ETQMMIHSKSLNGK.

This sequence belongs to the G-protein coupled receptor 1 family. As to quaternary structure, homodimer and heterodimer. Heterodimerizes with CXCR5; leading to modulate the interaction between of CXCL13 and CXCR5.

The protein resides in the cell membrane. G-protein coupled receptor expressed in lymphocytes that acts as a chemotactic receptor for B-cells, T-cells, splenic dendritic cells, monocytes/macrophages and astrocytes. Receptor for oxysterol 7-alpha,25-dihydroxycholesterol (7-alpha,25-OHC) and other related oxysterols. Mediates cell positioning and movement of a number of cells by binding the 7-alpha,25-OHC ligand that forms a chemotactic gradient. Binding of 7-alpha,25-OHC mediates the correct localization of B-cells during humoral immune responses. Guides B-cell movement along the B-cell zone-T-cell zone boundary and later to interfollicular and outer follicular regions. Its specific expression during B-cell maturation helps position B-cells appropriately for mounting T-dependent antibody responses. Collaborates with CXCR5 to mediate B-cell migration; probably by forming a heterodimer with CXCR5 that affects the interaction between of CXCL13 and CXCR5. Also acts as a chemotactic receptor for some T-cells upon binding to 7-alpha,25-OHC ligand. Promotes follicular helper T (Tfh) cells differentiation by positioning activated T-cells at the follicle-T-zone interface, promoting contact of newly activated CD4 T-cells with activated dendritic cells and exposing them to Tfh-cell-promoting inducible costimulator (ICOS) ligand. Expression in splenic dendritic cells is required for their homeostasis, localization and ability to induce B- and T-cell responses: GPR183 acts as a chemotactic receptor in dendritic cells that mediates the accumulation of CD4(+) dendritic cells in bridging channels. Regulates migration of astrocytes and is involved in communication between astrocytes and macrophages. Promotes osteoclast precursor migration to bone surfaces. Signals constitutively through G(i)-alpha, but not G(s)-alpha or G(q)-alpha. Signals constitutively also via MAPK1/3 (ERK1/2). The polypeptide is G-protein coupled receptor 183 (GPR183) (Bos taurus (Bovine)).